Consider the following 147-residue polypeptide: Cyclic di-AMP receptor B (147 aa).

Positions 18-78 (MIEADKVAHV…SIFGLERIEF (61 aa)) constitute a CBS domain. Lys23, Ala25, Thr46, Ala47, and Arg131 together coordinate 3',3'-c-di-AMP.

As to quaternary structure, homodimer. Forms a homodimer with a parallel, head-to-head assembly of the monomers. Under conditions of potassium starvation and corresponding low c-di-AMP levels, apo-DarB specifically interacts with the N-terminal region of the RelA. Under the same conditions, apo-DarB also specifically interacts with the C-terminal part of the pyruvate carboxylase.

Binds c-di-AMP. Binding of c-di-AMP to DarB inhibits the interaction with RelA and PYC. In terms of biological role, involved in the c-di-AMP-dependent regulation of the bacterial stringent response. Modulates the activities of at least two enzymes under conditions of potassium limitation. Apo-DarB regulates the activity of the GTP pyrophosphokinase RelA by interacting directly with RelA, leading to stimulation of (p)ppGpp synthesis and induction of the stringent response. Apo-DarB also regulates pyruvate carboxylase (PYC) at two levels: directly at the protein level by binding to the enzyme and stimulating the synthesis of oxaloacetate and indirectly, by interaction with RelA, which leads to activation of the stringent response and to the increased expression of the pycA gene. Stimulation of these enzymes by DarB is prevented in the presence of cyclic di-AMP (c-di-AMP). This is Cyclic di-AMP receptor B from Bacillus subtilis (strain 168).